The following is a 623-amino-acid chain: Leucine aminopeptidase 2 (623 aa).

A peptide-binding positions include 136-138 and 261-266; these read QCE and PYGGME. Residue histidine 290 coordinates Zn(2+). Glutamate 291 functions as the Proton acceptor in the catalytic mechanism. Histidine 294 and glutamate 313 together coordinate Zn(2+). Residue tyrosine 391 is the Proton donor of the active site.

The protein belongs to the peptidase M1 family. The cofactor is Zn(2+).

The protein localises to the cytoplasm. It localises to the nucleus. It carries out the reaction an epoxide + H2O = an ethanediol. Functionally, aminopeptidase that preferentially cleaves di- and tripeptides. Also has low epoxide hydrolase activity (in vitro). Can hydrolyze the epoxide leukotriene LTA(4) but it forms preferentially 5,6-dihydroxy-7,9,11,14-eicosatetraenoic acid rather than the cytokine leukotriene B(4) as the product compared to the homologous mammalian enzyme (in vitro). The sequence is that of Leucine aminopeptidase 2 (LKH1) from Candida albicans (strain SC5314 / ATCC MYA-2876) (Yeast).